Reading from the N-terminus, the 365-residue chain is Outer capsid protein sigma-3 (365 aa).

A CCHC-type zinc finger spans residues 51–73 (CMHCLGVVGSLQRKLKHLPHHRC).

Belongs to the orthoreovirus sigma-3 protein family. Heterohexamer of three sigma-3 and three Mu-1 proteins. The RNA-binding form is probably a homodimer. Post-translationally, cleaved during virus the endosomal proteolytic disassembly of the outer capsid.

The protein localises to the virion. It is found in the host cytoplasm. The protein resides in the host nucleus. Functionally, stimulates translation by blocking the activation of the dsRNA-dependent protein kinase EIF2AK2/PKR, thereby inhibiting the host interferon response. Sigma3 prevents the activation of EIF2AK2 by competing with the kinase for dsRNA-binding. In terms of biological role, the viral outer shell polypeptides, of which sigma-3 is one, impose structural constraints that prevent elongation of nascent transcripts by the RNA-dependent RNA polymerase lambda-3. The protein is Outer capsid protein sigma-3 (S4) of Reovirus type 3 (strain Dearing) (T3D).